We begin with the raw amino-acid sequence, 97 residues long: Secreted RxLR effector protein BLR05 (97 aa).

The signal sequence occupies residues 1-21; it reads MGPQHLLALVVVSILVAAGNA. The short motif at 32-60 is the RxLR-dEER element; it reads RALRPSVIADQEHAVHAIPATNFISKDED. The chain crosses the membrane as a helical span at residues 69 to 89; the sequence is IEIIRIAIFSLLVVGVFAIMA.

This sequence belongs to the RxLR effector family. In terms of assembly, interacts with host transcription factor NAC069.

The protein localises to the secreted. It localises to the host endoplasmic reticulum membrane. Secreted effector that inhibits stress-induced relocalization of the transcription factor NAC069 to the nucleus, thus affecting its broad role in abiotic and biotic stress responses. This Bremia lactucae (Lettuce downy mildew) protein is Secreted RxLR effector protein BLR05.